The primary structure comprises 422 residues: Histidine--tRNA ligase (422 aa).

It belongs to the class-II aminoacyl-tRNA synthetase family. Homodimer.

It is found in the cytoplasm. The catalysed reaction is tRNA(His) + L-histidine + ATP = L-histidyl-tRNA(His) + AMP + diphosphate + H(+). The sequence is that of Histidine--tRNA ligase from Aliivibrio fischeri (strain ATCC 700601 / ES114) (Vibrio fischeri).